The sequence spans 303 residues: N-acetyl-D-glucosamine kinase (303 aa).

Residues 4 to 11 and 133 to 140 each bind ATP; these read GFDIGGTK and GVGGGLVF. Zn(2+)-binding residues include H157, C177, C179, and C184.

It belongs to the ROK (NagC/XylR) family. NagK subfamily.

The enzyme catalyses N-acetyl-D-glucosamine + ATP = N-acetyl-D-glucosamine 6-phosphate + ADP + H(+). The protein operates within cell wall biogenesis; peptidoglycan recycling. Catalyzes the phosphorylation of N-acetyl-D-glucosamine (GlcNAc) derived from cell-wall degradation, yielding GlcNAc-6-P. This Shigella flexneri serotype 5b (strain 8401) protein is N-acetyl-D-glucosamine kinase.